A 297-amino-acid chain; its full sequence is 4-diphosphocytidyl-2-C-methyl-D-erythritol kinase (297 aa).

Residue lysine 10 is part of the active site. Residue 94–104 (PVAAGLAGGSS) coordinates ATP. Aspartate 136 is an active-site residue.

Belongs to the GHMP kinase family. IspE subfamily.

It carries out the reaction 4-CDP-2-C-methyl-D-erythritol + ATP = 4-CDP-2-C-methyl-D-erythritol 2-phosphate + ADP + H(+). It functions in the pathway isoprenoid biosynthesis; isopentenyl diphosphate biosynthesis via DXP pathway; isopentenyl diphosphate from 1-deoxy-D-xylulose 5-phosphate: step 3/6. Functionally, catalyzes the phosphorylation of the position 2 hydroxy group of 4-diphosphocytidyl-2C-methyl-D-erythritol. The protein is 4-diphosphocytidyl-2-C-methyl-D-erythritol kinase of Shouchella clausii (strain KSM-K16) (Alkalihalobacillus clausii).